The sequence spans 272 residues: Peptidoglycolipid exporter Gap (272 aa).

6 helical membrane-spanning segments follow: residues 5–25, 36–56, 79–99, 171–191, 206–226, and 252–272; these read ILGL…ILLV, VVFW…PLFV, IEPF…VIAL, LWVA…VLLV, IIAV…TLLS, and ILLV…LGVI.

It belongs to the peptidoglycolipid addressing protein (GAP) (TC 2.A.116) family.

It is found in the cell inner membrane. Its function is as follows. Required for the transport of peptidoglycolipids (GPLs) to the cell surface. This chain is Peptidoglycolipid exporter Gap, found in Mycolicibacterium smegmatis (strain ATCC 700084 / mc(2)155) (Mycobacterium smegmatis).